We begin with the raw amino-acid sequence, 216 residues long: Probable ubiquitin-conjugating enzyme E2 ECU01_1010 (216 aa).

The span at 1-10 (MFKPSAHRRL) shows a compositional bias: basic residues. Residues 1-29 (MFKPSAHRRLPREDDIIQEDDEDGPLWPS) form a disordered region. Positions 29–196 (SALRRLSNEE…VIRIAREEDE (168 aa)) constitute a UBC core domain. Cys120 functions as the Glycyl thioester intermediate in the catalytic mechanism.

This sequence belongs to the ubiquitin-conjugating enzyme family.

The catalysed reaction is S-ubiquitinyl-[E1 ubiquitin-activating enzyme]-L-cysteine + [E2 ubiquitin-conjugating enzyme]-L-cysteine = [E1 ubiquitin-activating enzyme]-L-cysteine + S-ubiquitinyl-[E2 ubiquitin-conjugating enzyme]-L-cysteine.. It participates in protein modification; protein ubiquitination. Catalyzes the covalent attachment of ubiquitin to other proteins so as to signal them for selective protein degradation. Involved in the formation of multiubiquitin chains. In Encephalitozoon cuniculi (strain GB-M1) (Microsporidian parasite), this protein is Probable ubiquitin-conjugating enzyme E2 ECU01_1010.